Consider the following 928-residue polypeptide: Protein naked cuticle (928 aa).

A compositionally biased stretch (polar residues) spans 68–80 (IITTPPGNASGAG). Residues 68-133 (IITTPPGNAS…SNGKHGKYSN (66 aa)) are disordered. Over residues 84 to 101 (QSHHQTNHHSSGRSHPGH) the composition is skewed to basic residues. Positions 120 to 133 (ISSTSNGKHGKYSN) are enriched in polar residues. Positions 177–253 (EFTCDVSVEG…TVSPEGKSKS (77 aa)) are interaction with dsh. One can recognise an EF-hand domain in the interval 188-224 (KSSQPLQFSFTFYDLDGHHGKITKDDIVGIVYTIYES). Positions 227-372 (KSVVVPHCGS…ARYHQKNNSR (146 aa)) are important for binding to zinc. Disordered stretches follow at residues 291 to 368 (GVGS…YHQK), 462 to 543 (VGND…KSAE), 578 to 600 (NVSPIRQPAAQQQPQQQQRQRCN), 614 to 668 (PVAQ…HPQP), and 779 to 825 (LQQK…GSKI). Over residues 307 to 317 (RRQHRYRPRKL) the composition is skewed to basic residues. Phosphoserine occurs at positions 320, 327, and 329. Basic residues predominate over residues 353–368 (GKSHHHQSQSARYHQK). Polar residues predominate over residues 484 to 493 (QPQSLNHKSA). A compositionally biased stretch (low complexity) spans 525-538 (HQHQQQNQQQQQQQ). Residues 543–572 (ECWKSALNRNDLISIIRESMEKNRLCFQLN) form a required for nuclear localization and inhibition of Wnt signaling region. 2 stretches are compositionally biased toward low complexity: residues 583–598 (RQPAAQQQPQQQQRQR) and 624–649 (SPPTAEPTTPSIPAAPPAIEVNGQQH). A compositionally biased stretch (basic residues) spans 650–663 (HPTHPTHPSHHNHH). Basic and acidic residues predominate over residues 802 to 811 (QPKDASRSEQ). The segment covering 812–822 (RPPTSNSSSAG) has biased composition (polar residues).

The protein belongs to the NKD family. In terms of assembly, interacts with dsh. This interaction may be stabilized by zinc.

It is found in the cell membrane. It localises to the cytoplasm. The protein localises to the nucleus. Functionally, cell autonomous antagonist of the canonical Wnt signaling pathway. May activate a second Wnt signaling pathway that controls planar cell polarity. Required for neuroblast specification. This is Protein naked cuticle (nkd) from Drosophila melanogaster (Fruit fly).